The sequence spans 236 residues: Large ribosomal subunit protein uL1 (236 aa).

Belongs to the universal ribosomal protein uL1 family. As to quaternary structure, part of the 50S ribosomal subunit.

In terms of biological role, binds directly to 23S rRNA. The L1 stalk is quite mobile in the ribosome, and is involved in E site tRNA release. Functionally, protein L1 is also a translational repressor protein, it controls the translation of the L11 operon by binding to its mRNA. The chain is Large ribosomal subunit protein uL1 from Protochlamydia amoebophila (strain UWE25).